Reading from the N-terminus, the 172-residue chain is Nicotinamide-nucleotide adenylyltransferase (172 aa).

The protein belongs to the archaeal NMN adenylyltransferase family.

It localises to the cytoplasm. The enzyme catalyses beta-nicotinamide D-ribonucleotide + ATP + H(+) = diphosphate + NAD(+). Its pathway is cofactor biosynthesis; NAD(+) biosynthesis; NAD(+) from nicotinamide D-ribonucleotide: step 1/1. The polypeptide is Nicotinamide-nucleotide adenylyltransferase (Methanococcus vannielii (strain ATCC 35089 / DSM 1224 / JCM 13029 / OCM 148 / SB)).